We begin with the raw amino-acid sequence, 193 residues long: Bcl-2-binding component 3, isoforms 1/2 (193 aa).

Disordered regions lie at residues 1-28 (MARA…FPLG) and 71-138 (ALGG…REIG). Residue Ser-10 is modified to Phosphoserine. A compositionally biased stretch (low complexity) spans 71–82 (ALGGSRWPGGPR). Residues 137–151 (IGAQLRRMADDLNAQ) carry the BH3 motif.

It belongs to the Bcl-2 family. In terms of assembly, interacts with MCL1 and BCL2A1. Interacts (via BH3 domain) with BCL2. Interacts with BCL2L1/BCL-XL. Interacts (via BH3 domain) with NOL3/ARC (via CARD domain); this interaction prevents BBC3 association with BCL2 and results in CASP8 activation. In terms of tissue distribution, ubiquitously expressed.

It localises to the mitochondrion. Essential mediator of p53/TP53-dependent and p53/TP53-independent apoptosis. Promotes partial unfolding of BCL2L1 and dissociation of BCL2L1 from p53/TP53, releasing the bound p53/TP53 to induce apoptosis. Regulates ER stress-induced neuronal apoptosis. The protein is Bcl-2-binding component 3, isoforms 1/2 (BBC3) of Homo sapiens (Human).